Consider the following 235-residue polypeptide: MKRSKSYRKAAEQIDRTRLYTPAEAVRLAKETSTVKFDATVEVAMRLGVDPRKADQMVRGTVNLPHGTGKTARVLVFAAGERAEQARAAGADYVGDDDLVERIQQGFLDFDAVVATPDMMGKIGRLGRILGPRGLMPNPKTGTVTMDVAKAVSDIKGGKIEFRVDRHGNLHLIIGKVSFDEQKLLENYLAAVDEVLRLKPSAAKGRYIKKITLTTTMGPGIPVDPNATREAAKAA.

The protein belongs to the universal ribosomal protein uL1 family. Part of the 50S ribosomal subunit.

Binds directly to 23S rRNA. The L1 stalk is quite mobile in the ribosome, and is involved in E site tRNA release. Functionally, protein L1 is also a translational repressor protein, it controls the translation of the L11 operon by binding to its mRNA. This is Large ribosomal subunit protein uL1 from Thermobifida fusca (strain YX).